The primary structure comprises 842 residues: Envelope glycoprotein gp160 (842 aa).

A signal peptide spans 1–23; the sequence is MGMKSGWLLFYLLVSLIKVIGSE. Topologically, residues 24 to 663 are extracellular; the sequence is QHWVTVYYGV…ITKWLWYIKI (640 aa). Residues cysteine 45 and cysteine 65 are joined by a disulfide bond. N-linked (GlcNAc...) asparagine; by host glycosylation is found at asparagine 79, asparagine 123, asparagine 131, asparagine 134, asparagine 149, asparagine 153, asparagine 181, asparagine 190, asparagine 225, asparagine 229, asparagine 234, asparagine 255, asparagine 267, asparagine 278, asparagine 284, asparagine 290, asparagine 320, asparagine 331, and asparagine 345. 5 disulfide bridges follow: cysteine 110-cysteine 198, cysteine 117-cysteine 189, cysteine 122-cysteine 150, cysteine 211-cysteine 240, and cysteine 221-cysteine 232. The V1 stretch occupies residues 122–149; that stretch reads CNDSYGEERNNTNMTTREPDIGYKQMKN. Residues 150 to 189 are V2; the sequence is CSFNATTELTDKKKQVYSLFYVEDVVPINAYNKTYRLINC. The tract at residues 285 to 318 is V3; that stretch reads CTRPGNNTGGQVQIGPAMTFYNIEKIVGDIRQAY. A disulfide bridge connects residues cysteine 285 and cysteine 319. The tract at residues 353-363 is CD4-binding loop; the sequence is RNEGDLEVTHL. 2 disulfide bridges follow: cysteine 367–cysteine 423 and cysteine 374–cysteine 396. Positions 374–396 are V4; it reads CNTSKLFNEELLNETGEPITLPC. N-linked (GlcNAc...) asparagine; by host glycosylation is found at asparagine 375, asparagine 386, asparagine 422, and asparagine 426. 2 V5 regions span residues 439 to 448 and 441 to 448; these read DTKETIVYPS and KETIVYPS. Residues 489–510 are fusion peptide; that stretch reads AAFGLGALFLGFLGAAGSTMGA. The tract at residues 552 to 570 is immunosuppression; it reads KQLQAKVLAIERYLRDQQI. Cysteine 576 and cysteine 582 form a disulfide bridge. 5 N-linked (GlcNAc...) asparagine; by host glycosylation sites follow: asparagine 589, asparagine 594, asparagine 595, asparagine 604, and asparagine 616. The stretch at 612 to 646 forms a coiled coil; sequence EKVRNYSGVIFGLIEQAQEQQNTNEKSLLELDQWD. Positions 641–662 are MPER; binding to GalCer; it reads ELDQWDSLWSWFGITKWLWYIK. The helical transmembrane segment at 664–684 threads the bilayer; that stretch reads AIMIVAGIVGIRIISIVITII. At 685–842 the chain is on the cytoplasmic side; sequence ARVRQGYSPL…IRQGLERALI (158 aa). Residues 691 to 694 carry the YXXL motif; contains endocytosis signal motif; it reads YSPL.

This sequence belongs to the HIV-1 env protein family. As to quaternary structure, the mature envelope protein (Env) consists of a homotrimer of non-covalently associated gp120-gp41 heterodimers. The resulting complex protrudes from the virus surface as a spike. There seems to be as few as 10 spikes on the average virion. Interacts with host CD4, CCR5 and CXCR4. Gp120 also interacts with the C-type lectins CD209/DC-SIGN and CLEC4M/DC-SIGNR (collectively referred to as DC-SIGN(R)). Gp120 and gp41 interact with GalCer. Gp120 interacts with host ITGA4/ITGB7 complex; on CD4+ T-cells, this interaction results in rapid activation of integrin ITGAL/LFA-1, which facilitates efficient cell-to-cell spreading of HIV-1. Gp120 interacts with cell-associated heparan sulfate; this interaction increases virus infectivity on permissive cells and may be involved in infection of CD4- cells. In terms of assembly, the mature envelope protein (Env) consists of a homotrimer of non-covalently associated gp120-gp41 heterodimers. The resulting complex protrudes from the virus surface as a spike. There seems to be as few as 10 spikes on the average virion. Post-translationally, highly glycosylated by host. The high number of glycan on the protein is reffered to as 'glycan shield' because it contributes to hide protein sequence from adaptive immune system. Palmitoylation of the transmembrane protein and of Env polyprotein (prior to its proteolytic cleavage) is essential for their association with host cell membrane lipid rafts. Palmitoylation is therefore required for envelope trafficking to classical lipid rafts, but not for viral replication. In terms of processing, specific enzymatic cleavages in vivo yield mature proteins. Envelope glycoproteins are synthesized as an inactive precursor that is heavily N-glycosylated and processed likely by host cell furin in the Golgi to yield the mature SU and TM proteins. The cleavage site between SU and TM requires the minimal sequence [KR]-X-[KR]-R. About 2 of the 9 disulfide bonds of gp41 are reduced by P4HB/PDI, following binding to CD4 receptor.

The protein localises to the virion membrane. The protein resides in the host cell membrane. Its subcellular location is the host endosome membrane. Functionally, oligomerizes in the host endoplasmic reticulum into predominantly trimers. In a second time, gp160 transits in the host Golgi, where glycosylation is completed. The precursor is then proteolytically cleaved in the trans-Golgi and thereby activated by cellular furin or furin-like proteases to produce gp120 and gp41. Attaches the virus to the host lymphoid cell by binding to the primary receptor CD4. This interaction induces a structural rearrangement creating a high affinity binding site for a chemokine coreceptor like CXCR4 and/or CCR5. Acts as a ligand for CD209/DC-SIGN and CLEC4M/DC-SIGNR, which are respectively found on dendritic cells (DCs), and on endothelial cells of liver sinusoids and lymph node sinuses. These interactions allow capture of viral particles at mucosal surfaces by these cells and subsequent transmission to permissive cells. HIV subverts the migration properties of dendritic cells to gain access to CD4+ T-cells in lymph nodes. Virus transmission to permissive T-cells occurs either in trans (without DCs infection, through viral capture and transmission), or in cis (following DCs productive infection, through the usual CD4-gp120 interaction), thereby inducing a robust infection. In trans infection, bound virions remain infectious over days and it is proposed that they are not degraded, but protected in non-lysosomal acidic organelles within the DCs close to the cell membrane thus contributing to the viral infectious potential during DCs' migration from the periphery to the lymphoid tissues. On arrival at lymphoid tissues, intact virions recycle back to DCs' cell surface allowing virus transmission to CD4+ T-cells. Its function is as follows. Acts as a class I viral fusion protein. Under the current model, the protein has at least 3 conformational states: pre-fusion native state, pre-hairpin intermediate state, and post-fusion hairpin state. During fusion of viral and target intracellular membranes, the coiled coil regions (heptad repeats) assume a trimer-of-hairpins structure, positioning the fusion peptide in close proximity to the C-terminal region of the ectodomain. The formation of this structure appears to drive apposition and subsequent fusion of viral and target cell membranes. Complete fusion occurs in host cell endosomes and is dynamin-dependent, however some lipid transfer might occur at the plasma membrane. The virus undergoes clathrin-dependent internalization long before endosomal fusion, thus minimizing the surface exposure of conserved viral epitopes during fusion and reducing the efficacy of inhibitors targeting these epitopes. Membranes fusion leads to delivery of the nucleocapsid into the cytoplasm. This is Envelope glycoprotein gp160 from Human immunodeficiency virus type 1 group N (isolate YBF30) (HIV-1).